Reading from the N-terminus, the 101-residue chain is NADH-quinone oxidoreductase subunit K (101 aa).

The next 3 membrane-spanning stretches (helical) occupy residues 4-24 (LAHFLVLGAILFAISIVGIFL), 30-50 (IVLLMALELLLLAVNMNFVAF), and 61-81 (VFVFFILTVAAAESAIGLAIL).

This sequence belongs to the complex I subunit 4L family. In terms of assembly, NDH-1 is composed of 14 different subunits. Subunits NuoA, H, J, K, L, M, N constitute the membrane sector of the complex.

The protein localises to the cell inner membrane. It catalyses the reaction a quinone + NADH + 5 H(+)(in) = a quinol + NAD(+) + 4 H(+)(out). Its function is as follows. NDH-1 shuttles electrons from NADH, via FMN and iron-sulfur (Fe-S) centers, to quinones in the respiratory chain. The immediate electron acceptor for the enzyme in this species is believed to be ubiquinone. Couples the redox reaction to proton translocation (for every two electrons transferred, four hydrogen ions are translocated across the cytoplasmic membrane), and thus conserves the redox energy in a proton gradient. This is NADH-quinone oxidoreductase subunit K from Cupriavidus metallidurans (strain ATCC 43123 / DSM 2839 / NBRC 102507 / CH34) (Ralstonia metallidurans).